A 602-amino-acid polypeptide reads, in one-letter code: Proteasome-associated ATPase (602 aa).

A coiled-coil region spans residues 13-89 (PDAAEVERLR…LREEVDRLGQ (77 aa)). 289 to 294 (GCGKTL) provides a ligand contact to ATP. The interval 601 to 602 (YL) is docks into pockets in the proteasome alpha-ring.

The protein belongs to the AAA ATPase family. In terms of assembly, homohexamer. Assembles into a hexameric ring structure that caps the 20S proteasome core. Strongly interacts with the prokaryotic ubiquitin-like protein Pup through a hydrophobic interface; the interacting region of ARC lies in its N-terminal coiled-coil domain. There is one Pup binding site per ARC hexamer ring. Upon ATP-binding, the C-terminus of ARC interacts with the alpha-rings of the proteasome core, possibly by binding to the intersubunit pockets.

It functions in the pathway protein degradation; proteasomal Pup-dependent pathway. In terms of biological role, ATPase which is responsible for recognizing, binding, unfolding and translocation of pupylated proteins into the bacterial 20S proteasome core particle. May be essential for opening the gate of the 20S proteasome via an interaction with its C-terminus, thereby allowing substrate entry and access to the site of proteolysis. Thus, the C-termini of the proteasomal ATPase may function like a 'key in a lock' to induce gate opening and therefore regulate proteolysis. This is Proteasome-associated ATPase from Mycobacteroides abscessus (strain ATCC 19977 / DSM 44196 / CCUG 20993 / CIP 104536 / JCM 13569 / NCTC 13031 / TMC 1543 / L948) (Mycobacterium abscessus).